We begin with the raw amino-acid sequence, 104 residues long: Large ribosomal subunit protein bL21 (104 aa).

The protein belongs to the bacterial ribosomal protein bL21 family. In terms of assembly, part of the 50S ribosomal subunit. Contacts protein L20.

Its function is as follows. This protein binds to 23S rRNA in the presence of protein L20. This Rhodopirellula baltica (strain DSM 10527 / NCIMB 13988 / SH1) protein is Large ribosomal subunit protein bL21.